We begin with the raw amino-acid sequence, 25 residues long: Dermaseptin-5.2TR (25 aa).

Valine amide is present on Val-25.

Expressed by the skin glands.

It localises to the secreted. In terms of biological role, has antimicrobial activity. In Phyllomedusa trinitatis (Trinidad leaf frog), this protein is Dermaseptin-5.2TR.